We begin with the raw amino-acid sequence, 214 residues long: ATP phosphoribosyltransferase (214 aa).

This sequence belongs to the ATP phosphoribosyltransferase family. Short subfamily. In terms of assembly, heteromultimer composed of HisG and HisZ subunits.

Its subcellular location is the cytoplasm. It carries out the reaction 1-(5-phospho-beta-D-ribosyl)-ATP + diphosphate = 5-phospho-alpha-D-ribose 1-diphosphate + ATP. It functions in the pathway amino-acid biosynthesis; L-histidine biosynthesis; L-histidine from 5-phospho-alpha-D-ribose 1-diphosphate: step 1/9. Catalyzes the condensation of ATP and 5-phosphoribose 1-diphosphate to form N'-(5'-phosphoribosyl)-ATP (PR-ATP). Has a crucial role in the pathway because the rate of histidine biosynthesis seems to be controlled primarily by regulation of HisG enzymatic activity. The protein is ATP phosphoribosyltransferase of Methylibium petroleiphilum (strain ATCC BAA-1232 / LMG 22953 / PM1).